The chain runs to 279 residues: uncharacterized protein (279 aa).

The span at 1 to 29 (MSSRYTSSYTPSSRYGSGWDYSSSYSSSR) shows a compositional bias: low complexity. Disordered regions lie at residues 1–111 (MSSR…APRE) and 137–233 (LTLA…AEAL). Basic and acidic residues predominate over residues 30 to 44 (TSRDRDTGSYRDRDY). A compositionally biased stretch (low complexity) spans 45–59 (SSTSYTSTRPRYSTY). Positions 142–153 (EPEESEEEEDDE) are enriched in acidic residues. Residues 170 to 186 (ESSPVSSPVKEVSSAAS) show a composition bias toward low complexity. The segment covering 189-205 (ANDNGNETENRTPSPTV) has biased composition (polar residues). Positions 221 to 233 (SDVKKEGGDAEAL) are enriched in basic and acidic residues.

This is an uncharacterized protein from Caenorhabditis elegans.